Consider the following 136-residue polypeptide: Glutamate mutase sigma subunit (136 aa).

In terms of domain architecture, B12-binding spans 3-136 (KKKIVIGVIG…IIDLKKDFKI (134 aa)). Adenosylcob(III)alamin is bound by residues 13-17 (SDCHT), His16, and 61-63 (SSI).

This sequence belongs to the methylaspartate mutase GlmS subunit family. As to quaternary structure, heterotetramer composed of 2 epsilon subunits (GlmE) and 2 sigma subunits (GlmS). GlmE exists as a homodimer and GlmS as a monomer. It depends on adenosylcob(III)alamin as a cofactor.

The enzyme catalyses (2S,3S)-3-methyl-L-aspartate = L-glutamate. Its pathway is amino-acid degradation; L-glutamate degradation via mesaconate pathway; acetate and pyruvate from L-glutamate: step 1/4. Catalyzes the carbon skeleton rearrangement of L-glutamate to L-threo-3-methylaspartate ((2S,3S)-3-methylaspartate). In Fusobacterium nucleatum subsp. nucleatum (strain ATCC 25586 / DSM 15643 / BCRC 10681 / CIP 101130 / JCM 8532 / KCTC 2640 / LMG 13131 / VPI 4355), this protein is Glutamate mutase sigma subunit.